The sequence spans 437 residues: Amino-acid acetyltransferase (437 aa).

Residues 289 to 429 (ENIRLATSFD…EHYNYQRMSK (141 aa)) form the N-acetyltransferase domain.

It belongs to the acetyltransferase family. ArgA subfamily.

The protein localises to the cytoplasm. It carries out the reaction L-glutamate + acetyl-CoA = N-acetyl-L-glutamate + CoA + H(+). Its pathway is amino-acid biosynthesis; L-arginine biosynthesis; N(2)-acetyl-L-ornithine from L-glutamate: step 1/4. The sequence is that of Amino-acid acetyltransferase from Actinobacillus pleuropneumoniae serotype 5b (strain L20).